Here is a 259-residue protein sequence, read N- to C-terminus: MLTRRIIPCLDVKAGRVVKGVKFLNHRDAGDPVELAAAYNAAGADELVFYDITASSDERAIMVEVVERTAAEVFIPLTVGGGLRSVDDMYRMLRAGADKVSLNTAAVYNPQLIAEGARRFGSQCIVLSVDAKRVNAPGEPPRWEVFTHTGANPRPTGLDAIEWIKRGIDLGAGEICINSMDADGARTGYDLELLQAITAISPVPVIASGGVGSPHDMYRGIVEGGADAVLAASIFHFGDYSVADVKRYLAERGVAVRMI.

Active-site residues include Asp-11 and Asp-130.

Belongs to the HisA/HisF family. In terms of assembly, heterodimer of HisH and HisF.

It is found in the cytoplasm. The catalysed reaction is 5-[(5-phospho-1-deoxy-D-ribulos-1-ylimino)methylamino]-1-(5-phospho-beta-D-ribosyl)imidazole-4-carboxamide + L-glutamine = D-erythro-1-(imidazol-4-yl)glycerol 3-phosphate + 5-amino-1-(5-phospho-beta-D-ribosyl)imidazole-4-carboxamide + L-glutamate + H(+). It functions in the pathway amino-acid biosynthesis; L-histidine biosynthesis; L-histidine from 5-phospho-alpha-D-ribose 1-diphosphate: step 5/9. Functionally, IGPS catalyzes the conversion of PRFAR and glutamine to IGP, AICAR and glutamate. The HisF subunit catalyzes the cyclization activity that produces IGP and AICAR from PRFAR using the ammonia provided by the HisH subunit. This Chloroflexus aurantiacus (strain ATCC 29366 / DSM 635 / J-10-fl) protein is Imidazole glycerol phosphate synthase subunit HisF.